The primary structure comprises 389 residues: Glutamate 5-kinase (389 aa).

K16 lines the ATP pocket. S56, D143, and N155 together coordinate substrate. Residue 175–176 (SD) participates in ATP binding. Residues 281-358 (AGGLHVDDGA…AEIEAILGYP (78 aa)) form the PUA domain.

The protein belongs to the glutamate 5-kinase family.

It is found in the cytoplasm. It carries out the reaction L-glutamate + ATP = L-glutamyl 5-phosphate + ADP. The protein operates within amino-acid biosynthesis; L-proline biosynthesis; L-glutamate 5-semialdehyde from L-glutamate: step 1/2. In terms of biological role, catalyzes the transfer of a phosphate group to glutamate to form L-glutamate 5-phosphate. This chain is Glutamate 5-kinase, found in Rhizobium leguminosarum bv. trifolii (strain WSM2304).